The chain runs to 185 residues: Photosystem I assembly protein Ycf4 (185 aa).

The next 2 helical transmembrane spans lie at 21-43 (NFFWACILFLGSLGFLAVGASSY) and 63-85 (GVVMSFYGIAGLFISSYLWCTIL).

The protein belongs to the Ycf4 family.

Its subcellular location is the plastid. The protein resides in the chloroplast thylakoid membrane. In terms of biological role, seems to be required for the assembly of the photosystem I complex. The sequence is that of Photosystem I assembly protein Ycf4 from Saccharum hybrid (Sugarcane).